Reading from the N-terminus, the 507-residue chain is Maturase K (507 aa).

Belongs to the intron maturase 2 family. MatK subfamily.

Its subcellular location is the plastid. It localises to the chloroplast. Usually encoded in the trnK tRNA gene intron. Probably assists in splicing its own and other chloroplast group II introns. The chain is Maturase K from Humulus lupulus (European hop).